The sequence spans 118 residues: Small ribosomal subunit protein uS13 (118 aa).

Residues 92 to 118 (KKHLPVRGQRTKTNARTRKGPRKPIKK) form a disordered region.

The protein belongs to the universal ribosomal protein uS13 family. Part of the 30S ribosomal subunit. Forms a loose heterodimer with protein S19. Forms two bridges to the 50S subunit in the 70S ribosome.

Its function is as follows. Located at the top of the head of the 30S subunit, it contacts several helices of the 16S rRNA. In the 70S ribosome it contacts the 23S rRNA (bridge B1a) and protein L5 of the 50S subunit (bridge B1b), connecting the 2 subunits; these bridges are implicated in subunit movement. Contacts the tRNAs in the A and P-sites. In Wigglesworthia glossinidia brevipalpis, this protein is Small ribosomal subunit protein uS13.